The following is a 624-amino-acid chain: Ubiquitin-associated and SH3 domain-containing protein A (624 aa).

Residues 19-60 (RSTPSLLDPLLAMGFPTHTALKALAATGRKTAEAAADWLHGH) enclose the UBA domain. The region spanning 238–303 (VHYQTLKALF…PENYTERANE (66 aa)) is the SH3 domain. The phosphatase-like stretch occupies residues 358–624 (RRGILVVRHG…FNWRNWISSN (267 aa)).

In terms of assembly, homodimer or homooligomer. Interacts with CBL. Part of a complex containing CBL and activated EGFR. Interacts with ubiquitin and with mono-ubiquitinated proteins. Interacts with dynamin.

It localises to the cytoplasm. It is found in the nucleus. Its function is as follows. Interferes with CBL-mediated down-regulation and degradation of receptor-type tyrosine kinases. Promotes accumulation of activated target receptors, such as T-cell receptors, EGFR and PDGFRB, on the cell surface. May inhibit dynamin-dependent endocytic pathways by functionally sequestering dynamin via its SH3 domain. Exhibits negligible protein tyrosine phosphatase activity at neutral pH. May act as a dominant-negative regulator of UBASH3B-dependent dephosphorylation. The protein is Ubiquitin-associated and SH3 domain-containing protein A (Ubash3a) of Mus musculus (Mouse).